The chain runs to 115 residues: Large ribosomal subunit protein bL20c (115 aa).

This sequence belongs to the bacterial ribosomal protein bL20 family.

It is found in the plastid. It localises to the chloroplast. Functionally, binds directly to 23S ribosomal RNA and is necessary for the in vitro assembly process of the 50S ribosomal subunit. It is not involved in the protein synthesizing functions of that subunit. This is Large ribosomal subunit protein bL20c (rpl20) from Mesostigma viride (Green alga).